A 1967-amino-acid chain; its full sequence is MSTEYSADSSKSFMIAMQSMIDTSQTFNLDRSKISLPDFDDELKKVQKDEQNQRTELTVLSQDRNDWDDIFEEFKDISFAQLQSIIDSYKTKNAVAVYKKIGKLINEAETTLSSNVLLETVLQMVYKHQKQELEKELLDFLGTGNIDLVSLLLQHRRMIVATPIETTILLIKNAVNSTPEFLTQQDIRNQVLKSAEDAKNRKLNPATKIIKYPHVFRKYEAGSTTAMAFAGQKFTLPVGTTRMSYNTHEEIIIPAADQASNKNYLYTKLLKISDLDHFCKTVFPYETLNQIQSLVYPVAYKTNENMLICAPTGAGKTDIALLTIINTIKQFSVVNGENEIDIQYDDFKVIYVAPLKALAAEIVDKFSKKLAPFNIQVRELTGDMQLTKAEILATQVIVTTPEKWDVVTRKANGDNDLVSKVKLLIIDEVHLLHEDRGSVIETLVARTLRQVESSQSMIRIIGLSATLPNFMDVADFLGVNRQIGMFYFDQSFRPKPLEQQLLGCRGKAGSRQSKENIDKVAYDKLSEMIQRGYQVMVFVHSRKETVKSARNFIKLAESNHEVDLFAPDPIEKDKYSRSLVKNRDKDMKEIFQFGFGIHHAGMARSDRNLTEKMFKDGAIKVLCCTATLAWGVNLPADCVIIKGTQVYDSKKGGFIDLGISDVIQIFGRGGRPGFGSANGTGILCTSNDRLDHYVSLITQQHPIESRFGSKLVDNLNAEISLGSVTNVDEAIEWLGYTYMFVRMRKNPFTYGIDWEEIANDPQLYERRRKMIVVAARRLHALQMIVFDEVSMHFIAKDLGRVSSDFYLLNESVEIFNQMCDPRATEADVLSMISMSSEFDGIKFREEESKELKRLSDESVECQIGSQLDTPQGKANVLLQAYISQTRIFDSALSSDSNYVAQNSVRICRALFLIGVNRRWGKFSNVMLNICKSIEKRLWAFDHPLCQFDLPENIIRRIRDTKPSMEHLLELEADELGELVHNKKAGSRLYKILSRFPKINIEAEIFPITTNVMRIHIALGPDFVWDSRIHGDAQFFWVFVEESDKSQILHFEKFILNRRQLNNQHEMDFMIPLSDPLPPQVVVKVVSDTWIGCESTHAISFQHLIRPFNETLQTKLLKLRPLPTSALQNPLIESIYPFKYFNPMQTMTFYTLYNTNENAFVGSPTGSGKTIVAELAIWHAFKTFPGKKIVYIAPMKALVRERVDDWRKKITPVTGDKVVELTGDSLPDPKDVHDATIVITTPEKFDGISRNWQTRKFVQDVSLIIMDEIHLLASDRGPILEMIVSRMNYISSQTKQPVRLLGMSTAVSNAYDMAGWLGVKDHGLYNFPSSVRPVPLKMYIDGFPDNLAFCPLMKTMNKPVFMAIKQHSPDKPALIFVASRRQTRLTALDLIHLCGMEDNPRRFLNIDDEEELQYYLSQVTDDTLKLSLQFGIGLHHAGLVQKDRSISHQLFQKNKIQILIATSTLAWGVNLPAHLVIIKGTQFFDAKIEGYRDMDLTDILQMMGRAGRPAYDTTGTAIVYTKESKKMFYKHFLNVGFPVESSLHKVLDDHLGAEITSGSITNKQEALDFLSWTFLFRRAHHNPTYYGIEDDTSTAGVSEHLSSLIDSTLENLRESQCVLLHGDDIVATPFLSISSYYYISHLTIRQLLKQIHDHATFQEVLRWLSLAVEYNELPVRGGEIIMNEEMSQQSRYSVESTFTDEFELPMWDPHVKTFLLLQAHLSRVDLPIADYIQDTVSVLDQSLRILQAYIDVASELGYFHTVLTMIKMMQCIKQGYWYEDDPVSVLPGLQLRRIKDYTFSEQGFIEMTPQQKKKKLLTLEEIGRFGYKKLLNVFDQLTFGMTESEDTKKRFVSVCQRLPVLEGMKFEEQENNEVLTFYSKHLSSKHNNGFEVYCDKFPKIQKELWFLIGHKGDELLMIKRCQPKQMNKEVIIHCDLFIPEEIRGEELQFSLINDALGLRYDMVHKLIS.

A Helicase ATP-binding 1 domain is found at 297–485; the sequence is PVAYKTNENM…FLGVNRQIGM (189 aa). ATP is bound at residue 310-317; it reads APTGAGKT. The DEVH box signature appears at 427 to 430; the sequence is DEVH. The Helicase C-terminal 1 domain occupies 516 to 735; that stretch reads NIDKVAYDKL…NVDEAIEWLG (220 aa). The 306-residue stretch at 795-1100 folds into the SEC63 1 domain; sequence AKDLGRVSSD…GCESTHAISF (306 aa). The region spanning 1149 to 1324 is the Helicase ATP-binding 2 domain; that stretch reads YTLYNTNENA…WLGVKDHGLY (176 aa). An ATP-binding site is contributed by 1162-1169; that stretch reads SPTGSGKT. The short motif at 1266–1269 is the DEAH box element; that stretch reads DEIH. The Helicase C-terminal 2 domain maps to 1355 to 1550; sequence MNKPVFMAIK…SLHKVLDDHL (196 aa). One can recognise an SEC63 2 domain in the interval 1626–1776; sequence ATPFLSISSY…MMQCIKQGYW (151 aa).

Belongs to the helicase family. SKI2 subfamily. As to quaternary structure, component of the RQT (ribosome quality control trigger) complex, composed of SLH1, CUE3, and RQT4. Interacts with CUE3. Interacts with RQT4. Interacts with HEL2. Associates with translating ribosomes.

The protein localises to the cytoplasm. It is found in the cytosol. It catalyses the reaction ATP + H2O = ADP + phosphate + H(+). Its function is as follows. Involved in activation of the ribosome quality control (RQC) pathway, a pathway that degrades nascent peptide chains during problematic translation. Drives the splitting of stalled ribosomes that are polyubiquitinated in a HEL2-dependent manner, as part of the ribosome quality control trigger (RQT) complex. Also represses the translation of non-poly(A) mRNAs together with SKI2. May block translation by inhibiting translation initiation factor 5B (FUN12) action on mRNAs lacking a 3' poly(A) structure. Involved in antiviral defense, preventing L-A dsRNA virus propagation by specifically blocking translation of viral mRNAs. In Saccharomyces cerevisiae (strain ATCC 204508 / S288c) (Baker's yeast), this protein is RQC trigger complex helicase SLH1.